A 163-amino-acid polypeptide reads, in one-letter code: Nucleotide-binding protein BSU11020 (163 aa).

It belongs to the YajQ family.

Nucleotide-binding protein. This is Nucleotide-binding protein BSU11020 (yitK) from Bacillus subtilis (strain 168).